We begin with the raw amino-acid sequence, 58 residues long: Small ribosomal subunit protein bS21 (58 aa).

It belongs to the bacterial ribosomal protein bS21 family.

This chain is Small ribosomal subunit protein bS21, found in Picosynechococcus sp. (strain ATCC 27264 / PCC 7002 / PR-6) (Agmenellum quadruplicatum).